Reading from the N-terminus, the 164-residue chain is Thiol peroxidase (164 aa).

Residues 16–162 (LQVGDIAKDF…YEAAINAAKI (147 aa)) form the Thioredoxin domain. The Cysteine sulfenic acid (-SOH) intermediate role is filled by Cys58. A disulfide bridge connects residues Cys58 and Cys92.

The protein belongs to the peroxiredoxin family. Tpx subfamily. As to quaternary structure, homodimer.

The catalysed reaction is a hydroperoxide + [thioredoxin]-dithiol = an alcohol + [thioredoxin]-disulfide + H2O. In terms of biological role, thiol-specific peroxidase that catalyzes the reduction of hydrogen peroxide and organic hydroperoxides to water and alcohols, respectively. Plays a role in cell protection against oxidative stress by detoxifying peroxides. This chain is Thiol peroxidase, found in Streptococcus agalactiae serotype V (strain ATCC BAA-611 / 2603 V/R).